A 210-amino-acid chain; its full sequence is MAKEKARYFTFLLYPESIPSDWELKLETLGVPMAISPLHDKDKSSIKGQKYKKAHYHVLYIAKNPVTADSVRKKIKLLLGEKSLAMVQVVLNVENMYLYLTHESKDAIAKKKHVYDKADIKLINNFDIDRYVTLDVEEKTELFNVVVSLIRAYTLQNIFDLYDFIDENGETYGLTINLVNEVIAGKTGFMKLLFDGAYQRSKRGTKNEER.

This sequence belongs to the Gram-positive plasmids replication protein type 2 family.

Its function is as follows. Is essential for plasmid replication. Nicks the positive strand at the plus origin of replication. The sequence is that of Replication protein RepB (repB) from Streptococcus agalactiae.